A 128-amino-acid polypeptide reads, in one-letter code: Probable 4-amino-4-deoxy-L-arabinose-phosphoundecaprenol flippase subunit ArnF (128 aa).

Residues 1-2 (MG) are Cytoplasmic-facing. Residues 3-23 (LIWGLFSVIIASVAQLSLGFA) traverse the membrane as a helical segment. Residues 24-35 (ASHLPPMTHLWD) lie on the Periplasmic side of the membrane. Residues 36 to 56 (FIAALLAFGLDARILLLGLLG) traverse the membrane as a helical segment. Residues 57–75 (YLLSVFCWYKTLHKLALSK) are Cytoplasmic-facing. A helical transmembrane segment spans residues 76 to 96 (AYALLSMSYVLVWIASMVLPG). Residues 97 to 100 (REGT) lie on the Periplasmic side of the membrane. Residues 101–121 (FSLKALLGVACIMSGLMLIFL) traverse the membrane as a helical segment. Over 122 to 128 (PTTKQRY) the chain is Cytoplasmic.

The protein belongs to the ArnF family. As to quaternary structure, heterodimer of ArnE and ArnF.

Its subcellular location is the cell inner membrane. It participates in bacterial outer membrane biogenesis; lipopolysaccharide biosynthesis. Its function is as follows. Translocates 4-amino-4-deoxy-L-arabinose-phosphoundecaprenol (alpha-L-Ara4N-phosphoundecaprenol) from the cytoplasmic to the periplasmic side of the inner membrane. In Shigella flexneri serotype 5b (strain 8401), this protein is Probable 4-amino-4-deoxy-L-arabinose-phosphoundecaprenol flippase subunit ArnF.